The chain runs to 252 residues: Flap endonuclease Xni (252 aa).

D105 is a binding site for Mg(2+). A 5'-3' exonuclease domain is found at 161–251 (VESTQFIDYL…NVNLKQFRIE (91 aa)). 5 residues coordinate K(+): L172, A173, P181, V183, and I186. The interaction with DNA stretch occupies residues 185 to 190 (GIGPKS).

This sequence belongs to the Xni family. Mg(2+) serves as cofactor. Requires K(+) as cofactor.

Has flap endonuclease activity. During DNA replication, flap endonucleases cleave the 5'-overhanging flap structure that is generated by displacement synthesis when DNA polymerase encounters the 5'-end of a downstream Okazaki fragment. The protein is Flap endonuclease Xni of Shewanella halifaxensis (strain HAW-EB4).